Consider the following 439-residue polypeptide: FK506-binding protein 59 (439 aa).

PPIase FKBP-type domains are found at residues 32–120 and 149–235; these read GCTV…LGWK and GAFV…VDCG. TPR repeat units lie at residues 252–285, 297–330, and 331–364; these read AKVY…LPTT, VATH…DKNN, and VKAL…EPGN.

In terms of assembly, interacts with inaD and trpl, and may be part of the inaD signaling complex. In terms of tissue distribution, expression in the embryo is limited to three tissues: lymph glands, Garland cells and oenocyte cells.

The catalysed reaction is [protein]-peptidylproline (omega=180) = [protein]-peptidylproline (omega=0). Functionally, may have a role in phototransduction; inhibits or prevents Ca(2+) induced stimulation of the trpl ion channel. This Drosophila melanogaster (Fruit fly) protein is FK506-binding protein 59.